A 76-amino-acid chain; its full sequence is Kappa-actitoxin-Avd4e (76 aa).

The first 19 residues, 1 to 19 (MNKALFLCLVVLCAAVVFA), serve as a signal peptide directing secretion. Residues 20–31 (AEDLQKAKHAPF) constitute a propeptide that is removed on maturation. 3 disulfide bridges follow: Cys37-Cys72, Cys39-Cys65, and Cys55-Cys73. The Cell attachment site signature appears at 45 to 47 (RGD).

This sequence belongs to the sea anemone type 3 (BDS) potassium channel toxin family. In terms of tissue distribution, moderately expressed in the ectodermal tissue from the distal and proximal tentacles, body wall, and oral disk.

It is found in the secreted. It localises to the nematocyst. In terms of biological role, is member of a fraction that shows antiangiogenic activity, since it inhibits human microvascular endothelial cells (HMEC) tubulogenesis. This protein could be a kunitz-type inhibitor with a RGD motif that could block angiogenesis in binding on integrins. Blocks Kv3 voltage-gated potassium channels. Reduces blood pressure. The sequence is that of Kappa-actitoxin-Avd4e from Anemonia viridis (Snakelocks anemone).